The chain runs to 1052 residues: Mitotic checkpoint serine/threonine-protein kinase BUB1 beta (1052 aa).

A BUB1 N-terminal domain is found at phenylalanine 56 to serine 219. The short motif at glycine 105–aspartate 112 is the Nuclear localization signal element. A necessary for interaction with KNL1 region spans residues alanine 146 to proline 179. Disordered regions lie at residues glutamate 206 to proline 256 and alanine 272 to proline 327. The D-box signature appears at arginine 217–serine 225. N6-acetyllysine; by PCAF is present on lysine 243. Serine 360 is subject to Phosphoserine. Residues threonine 361–glycine 381 form a disordered region. A Phosphoserine modification is found at serine 428. The tract at residues serine 496 to serine 552 is disordered. Residues leucine 508–proline 520 show a composition bias toward polar residues. 2 positions are modified to phosphoserine: serine 535 and serine 659. Serine 665 is subject to Phosphoserine; by PLK1. Serine 686 is modified (phosphoserine). In terms of domain architecture, Protein kinase spans valine 756–glutamine 1040. Leucine 762–phenylalanine 770 provides a ligand contact to ATP. Threonine 781 is modified (phosphothreonine; by PLK1). Lysine 784 is an ATP binding site. Residue aspartate 871 is the Proton acceptor of the active site. The residue at position 998 (threonine 998) is a Phosphothreonine; by PLK1. Serine 1033 and serine 1050 each carry phosphoserine.

The protein belongs to the protein kinase superfamily. Ser/Thr protein kinase family. BUB1 subfamily. In terms of assembly, interacts with CENPE. Interacts with PLK1. Part of a complex containing BUB3, CDC20 and BUB1B. Interacts with anaphase-promoting complex/cyclosome (APC/C). Interacts with KNL1. Interacts with KAT2B. Interacts with RIPK3. Interacts with the closed conformation form of MAD2L1. Interacts with CDC20. Proteolytically cleaved by caspase-3 in a cell cycle specific manner. The cleavage might be involved in the durability of the cell cycle delay. In terms of processing, acetylation at Lys-243 regulates its degradation and timing in anaphase entry. Post-translationally, ubiquitinated. Degraded by the proteasome. Ubiquitinated by UBR5, promoting disassembly of the mitotic checkpoint complex from the APC/C complex. Sumoylated with SUMO2 and SUMO3. The sumoylation mediates the association with CENPE at the kinetochore. In terms of processing, autophosphorylated in vitro. Intramolecular autophosphorylation stimulated by CENPE. Phosphorylated during mitosis and hyperphosphorylated in mitotically arrested cells. Phosphorylation at Ser-659 and Ser-1033 occurs at kinetochores upon mitotic entry with dephosphorylation at the onset of anaphase. Post-translationally, proteolytically cleaved by caspase-3 in a cell cycle specific manner. The cleavage might be involved in the durability of the cell cycle delay. Caspase-3 cleavage is associated with abrogation of the mitotic checkpoint. The major site of cleavage is at Asp-603. As to expression, highly expressed in thymus followed by spleen.

The protein resides in the cytoplasm. Its subcellular location is the nucleus. It localises to the chromosome. The protein localises to the centromere. It is found in the kinetochore. It carries out the reaction L-seryl-[protein] + ATP = O-phospho-L-seryl-[protein] + ADP + H(+). The enzyme catalyses L-threonyl-[protein] + ATP = O-phospho-L-threonyl-[protein] + ADP + H(+). With respect to regulation, kinase activity stimulated by CENPE. Its function is as follows. Essential component of the mitotic checkpoint. Required for normal mitosis progression and tumor suppression. The mitotic checkpoint delays anaphase until all chromosomes are properly attached to the mitotic spindle. One of its checkpoint functions is to inhibit the activity of the anaphase-promoting complex/cyclosome (APC/C) by blocking the binding of CDC20 to APC/C, independently of its kinase activity. The other is to monitor kinetochore activities that depend on the kinetochore motor CENPE. Required for kinetochore localization of CENPE. Negatively regulates PLK1 activity in interphase cells and suppresses centrosome amplification. Also implicated in triggering apoptosis in polyploid cells that exit aberrantly from mitotic arrest. Essential for tumor suppression. May play a role in regulating aging and fertility. The chain is Mitotic checkpoint serine/threonine-protein kinase BUB1 beta (Bub1b) from Mus musculus (Mouse).